The chain runs to 218 residues: Testis expressed protein 56 (218 aa).

In Rattus norvegicus (Rat), this protein is Testis expressed protein 56 (Tex56).